A 125-amino-acid polypeptide reads, in one-letter code: Apolipoprotein C-IV (125 aa).

An N-terminal signal peptide occupies residues 1–27; it reads MSLLRQRLQALPVLCLCVLVLACIGAC.

The protein belongs to the apolipoprotein C4 family.

Its subcellular location is the secreted. May participate in lipoprotein metabolism. The sequence is that of Apolipoprotein C-IV (APOC4) from Plecturocebus moloch (Dusky titi monkey).